We begin with the raw amino-acid sequence, 128 residues long: MSEGGGRVSRIFAAPTRLCRWPALIECGVNLTQPLCEWMIQVARDRTLSLAWEVASLLTLSSSEVGLEGVGTIWPSSYSSEENSRNGAEQGRQLSIEGPFQGQNCPSHPAAALPLPMRGESQATSCQV.

Over residues 77-87 the composition is skewed to polar residues; sequence SYSSEENSRNG. The segment at 77–128 is disordered; sequence SYSSEENSRNGAEQGRQLSIEGPFQGQNCPSHPAAALPLPMRGESQATSCQV.

Interacts with PRDX6.

Its subcellular location is the cytoplasm. The protein localises to the nucleus. In Pan troglodytes (Chimpanzee), this protein is Saitohin (STH).